A 426-amino-acid polypeptide reads, in one-letter code: Methionine aminopeptidase 2 (426 aa).

A disordered region spans residues 1 to 72 (MTSATTTEAT…QEQTNPPTVG (72 aa)). The segment covering 10–34 (TAKDLQEKLSLKENDVVEDDGKVEE) has biased composition (basic and acidic residues). The span at 47 to 60 (KKKKKKKKSSKKKK) shows a compositional bias: basic residues. His179 is a binding site for substrate. 3 residues coordinate a divalent metal cation: Asp199, Asp210, and His279. Residue His287 participates in substrate binding. Residues Glu312 and Glu407 each contribute to the a divalent metal cation site.

Belongs to the peptidase M24A family. Methionine aminopeptidase eukaryotic type 2 subfamily. Co(2+) serves as cofactor. The cofactor is Zn(2+). Mn(2+) is required as a cofactor. It depends on Fe(2+) as a cofactor.

It is found in the cytoplasm. It carries out the reaction Release of N-terminal amino acids, preferentially methionine, from peptides and arylamides.. In terms of biological role, cotranslationally removes the N-terminal methionine from nascent proteins. The N-terminal methionine is often cleaved when the second residue in the primary sequence is small and uncharged (Met-Ala-, Cys, Gly, Pro, Ser, Thr, or Val). This chain is Methionine aminopeptidase 2 (fma2), found in Schizosaccharomyces pombe (strain 972 / ATCC 24843) (Fission yeast).